The primary structure comprises 444 residues: Homogentisate 1,2-dioxygenase (444 aa).

The Proton acceptor role is filled by His298. The Fe cation site is built by His341 and Glu347. Residues Tyr356 and His377 each coordinate homogentisate. Position 377 (His377) interacts with Fe cation.

The protein belongs to the homogentisate dioxygenase family. As to quaternary structure, hexamer; dimer of trimers. Fe cation is required as a cofactor.

It carries out the reaction homogentisate + O2 = 4-maleylacetoacetate + H(+). It functions in the pathway amino-acid degradation; L-phenylalanine degradation; acetoacetate and fumarate from L-phenylalanine: step 4/6. Involved in the catabolism of homogentisate (2,5-dihydroxyphenylacetate or 2,5-OH-PhAc), a central intermediate in the degradation of phenylalanine and tyrosine. Catalyzes the oxidative ring cleavage of the aromatic ring of homogentisate to yield maleylacetoacetate. This Burkholderia ambifaria (strain ATCC BAA-244 / DSM 16087 / CCUG 44356 / LMG 19182 / AMMD) (Burkholderia cepacia (strain AMMD)) protein is Homogentisate 1,2-dioxygenase.